The primary structure comprises 70 residues: Cold shock-like protein CspA (70 aa).

The region spanning 7 to 67 is the CSD domain; that stretch reads GSVKWFNETK…GKKGPQAAQV (61 aa).

It localises to the cytoplasm. In Vibrio cholerae serotype O1 (strain ATCC 39315 / El Tor Inaba N16961), this protein is Cold shock-like protein CspA (cspA).